A 246-amino-acid chain; its full sequence is Thiamine import ATP-binding protein ThiQ (246 aa).

The ABC transporter domain occupies 10-239; the sequence is VKLDALAFAY…QGPPAFARYL (230 aa). Residue 41–48 participates in ATP binding; that stretch reads GPSGSGKS.

This sequence belongs to the ABC transporter superfamily. Thiamine importer (TC 3.A.1.19.1) family. As to quaternary structure, the complex is composed of two ATP-binding proteins (ThiQ), two transmembrane proteins (ThiP) and a solute-binding protein (ThiB).

The protein resides in the cell inner membrane. It catalyses the reaction thiamine(out) + ATP + H2O = thiamine(in) + ADP + phosphate + H(+). Part of the ABC transporter complex ThiBPQ involved in thiamine import. Responsible for energy coupling to the transport system. The sequence is that of Thiamine import ATP-binding protein ThiQ from Chelativorans sp. (strain BNC1).